Here is a 405-residue protein sequence, read N- to C-terminus: Accessory Sec system protein translocase subunit SecY2 (405 aa).

Helical transmembrane passes span 14–34, 63–83, 104–124, 131–151, 156–176, 191–211, 247–267, 285–305, 343–363, and 368–388; these read LFTLFLLFIYVLGSRIILPFV, LSIFSVGLSPWMSAMILWQMF, MYLTLMIAVIQSLAVSLRLPV, ILVVLMNTILLIAGTFFLVWL, ASMGIGGSIVILLSSMVLNIP, GIIVLLALLTLVFSYLLALMY, MYVMSFLSVPAYLFILLGFIF, PLWVYVYISVLFLFSIIFAFV, FSVIGGLFNVVMAGGPMLFVL, and LLRLAMIPGLFMMFGGMIFTI.

The protein belongs to the SecY/SEC61-alpha family. SecY2 subfamily. Component of the accessory SecA2/SecY2 protein translocase complex required to export cell wall proteins. May form heterotrimers with SecE and SecG subunits.

It is found in the cell membrane. In terms of biological role, part of the accessory SecA2/SecY2 system specifically required for export of possible cell wall proteins. The central subunit of a protein translocation channel. The protein is Accessory Sec system protein translocase subunit SecY2 of Streptococcus pneumoniae (strain CGSP14).